Here is a 146-residue protein sequence, read N- to C-terminus: Hemoglobin subunit beta (146 aa).

Positions 2–146 (FLTAEEKSLV…VANALAHKYH (145 aa)) constitute a Globin domain. Serine 44 bears the Phosphoserine mark. Position 59 is an N6-acetyllysine (lysine 59). Heme b is bound at residue histidine 63. Lysine 82 carries the post-translational modification N6-acetyllysine. Residue histidine 92 participates in heme b binding. Residue cysteine 93 is modified to S-nitrosocysteine. Residue lysine 144 is modified to N6-acetyllysine.

Belongs to the globin family. In terms of assembly, heterotetramer of two alpha chains and two beta chains. In terms of tissue distribution, red blood cells.

Involved in oxygen transport from the lung to the various peripheral tissues. This chain is Hemoglobin subunit beta (HBB), found in Proteles cristata (Aardwolf).